Reading from the N-terminus, the 110-residue chain is Insulin (110 aa).

A signal peptide spans 1-24 (MALWMHLLTVLALLALWGPNTGQA). 3 cysteine pairs are disulfide-bonded: cysteine 31/cysteine 96, cysteine 43/cysteine 109, and cysteine 95/cysteine 100. Residues 57 to 87 (ELEDPQVEQTELGMGLGAGGLQPLALEMALQ) constitute a propeptide, c peptide.

This sequence belongs to the insulin family. As to quaternary structure, heterodimer of a B chain and an A chain linked by two disulfide bonds.

It localises to the secreted. Insulin decreases blood glucose concentration. It increases cell permeability to monosaccharides, amino acids and fatty acids. It accelerates glycolysis, the pentose phosphate cycle, and glycogen synthesis in liver. The protein is Insulin (INS) of Cavia porcellus (Guinea pig).